We begin with the raw amino-acid sequence, 37 residues long: MVEPLLSGIVLGMIPVTLAGLFVTAYLQYRRGDQLDL.

A helical membrane pass occupies residues 5–25 (LLSGIVLGMIPVTLAGLFVTA).

This sequence belongs to the PetG family. In terms of assembly, the 4 large subunits of the cytochrome b6-f complex are cytochrome b6, subunit IV (17 kDa polypeptide, PetD), cytochrome f and the Rieske protein, while the 4 small subunits are PetG, PetL, PetM and PetN. The complex functions as a dimer.

It is found in the plastid. The protein resides in the chloroplast thylakoid membrane. Functionally, component of the cytochrome b6-f complex, which mediates electron transfer between photosystem II (PSII) and photosystem I (PSI), cyclic electron flow around PSI, and state transitions. PetG is required for either the stability or assembly of the cytochrome b6-f complex. The protein is Cytochrome b6-f complex subunit 5 of Staurastrum punctulatum (Green alga).